Reading from the N-terminus, the 117-residue chain is Large-conductance mechanosensitive channel (117 aa).

Helical transmembrane passes span Glu-7–Phe-27, Ile-30–Val-50, and Gly-64–Val-84.

This sequence belongs to the MscL family. Homopentamer.

It is found in the cell membrane. Functionally, channel that opens in response to stretch forces in the membrane lipid bilayer. May participate in the regulation of osmotic pressure changes within the cell. In Staphylococcus haemolyticus (strain JCSC1435), this protein is Large-conductance mechanosensitive channel.